Here is a 302-residue protein sequence, read N- to C-terminus: tRNA pseudouridine synthase B (302 aa).

D42 acts as the Nucleophile in catalysis.

This sequence belongs to the pseudouridine synthase TruB family. Type 1 subfamily.

It carries out the reaction uridine(55) in tRNA = pseudouridine(55) in tRNA. In terms of biological role, responsible for synthesis of pseudouridine from uracil-55 in the psi GC loop of transfer RNAs. The protein is tRNA pseudouridine synthase B of Leifsonia xyli subsp. xyli (strain CTCB07).